The chain runs to 306 residues: Polyphosphate kinase PPK2B (306 aa).

The protein belongs to the polyphosphate kinase 2 (PPK2) family. Class I subfamily. Homotetramer. The cofactor is Mn(2+).

It carries out the reaction [phosphate](n) + ATP = [phosphate](n+1) + ADP. It catalyses the reaction [phosphate](n) + GTP = [phosphate](n+1) + GDP. Its function is as follows. Catalyzes the synthesis of polyP from ATP or GTP. Can also use inorganic polyphosphate (polyP) as a donor to convert ADP to ATP, but the activity is 10-fold higher in vitro for polyP synthesis than for ATP formation. In Corynebacterium glutamicum (strain ATCC 13032 / DSM 20300 / JCM 1318 / BCRC 11384 / CCUG 27702 / LMG 3730 / NBRC 12168 / NCIMB 10025 / NRRL B-2784 / 534), this protein is Polyphosphate kinase PPK2B.